Consider the following 674-residue polypeptide: Secretin GspD (674 aa).

A signal peptide spans Met1–Ala24. The interval Asn25–Gly121 is N0. The interval Glu123 to Gly187 is N1. Residues Asp188 to Ala261 form an N2 region. Residues Gly264–Asp338 are N3. The segment at Gln343–Asp612 is secretin. A cap gate region spans residues Asp395–Thr417. A s domain region spans residues Val614–Gln674.

Belongs to the bacterial secretin family. GSP D subfamily. Forms a cylindrical channel with 15 subunits; unlike E.coli no 16-subunit channels are seen. The closed pentadeacameric channels are 195 Angstroms long and 145 Angstroms in diameter. Each subunit turns in a clock-wise manner around the channel.

The protein resides in the cell outer membrane. In terms of biological role, involved in a type II secretion system (T2SS, formerly general secretion pathway, GSP) for the export of proteins. Required for secretion of cholera toxin through the outer membrane. This subunit forms the outer membrane channel. The polypeptide is Secretin GspD (epsD) (Vibrio cholerae serotype O1 (strain ATCC 39315 / El Tor Inaba N16961)).